Consider the following 37-residue polypeptide: Cytochrome b6-f complex subunit 5 (37 aa).

A helical transmembrane segment spans residues 5–25 (LLCGIVLGLIPITLAGLFMAA).

This sequence belongs to the PetG family. In terms of assembly, the 4 large subunits of the cytochrome b6-f complex are cytochrome b6, subunit IV (17 kDa polypeptide, PetD), cytochrome f and the Rieske protein, while the 4 small subunits are PetG, PetL, PetM and PetN. The complex functions as a dimer.

It is found in the cellular thylakoid membrane. Functionally, component of the cytochrome b6-f complex, which mediates electron transfer between photosystem II (PSII) and photosystem I (PSI), cyclic electron flow around PSI, and state transitions. PetG is required for either the stability or assembly of the cytochrome b6-f complex. The protein is Cytochrome b6-f complex subunit 5 of Synechococcus elongatus (strain ATCC 33912 / PCC 7942 / FACHB-805) (Anacystis nidulans R2).